Here is a 166-residue protein sequence, read N- to C-terminus: uncharacterized protein (166 aa).

Positions 73 to 88 are enriched in low complexity; that stretch reads SKLNNNNNSNNNNKMA. Disordered stretches follow at residues 73–101 and 126–166; these read SKLN…EKDK and PQSS…EFNN. Residues 89 to 101 show a composition bias toward basic and acidic residues; it reads VDNKDNKDNEKDK. Residues 134–154 are compositionally biased toward low complexity; that stretch reads SPTHKSPSSSPKTISPVKVSP. Positions 155-166 are enriched in polar residues; sequence TSSPIKNPEFNN.

This is an uncharacterized protein from Dictyostelium discoideum (Social amoeba).